We begin with the raw amino-acid sequence, 473 residues long: Calcium/calmodulin-dependent protein kinase type IV (473 aa).

Residues Ser-12 and Ser-13 each carry the phosphoserine; by autocatalysis modification. The Protein kinase domain occupies Phe-46–Val-300. ATP contacts are provided by residues Leu-52–Val-60 and Lys-75. Thr-57 is a glycosylation site (O-linked (GlcNAc) threonine). Ser-58 carries O-linked (GlcNAc) serine glycosylation. Residue Ser-137 is glycosylated (O-linked (GlcNAc) serine). The active-site Proton acceptor is Asp-164. Ser-189 carries an O-linked (GlcNAc) serine glycan. Thr-200 bears the Phosphothreonine; by CaMKK1 and CaMKK2 mark. Positions Ala-305–Asn-321 are autoinhibitory domain. Positions Asn-306–Arg-323 are PP2A-binding. Residues Ala-322–Ser-341 form a calmodulin-binding region. A Phosphoserine; by autocatalysis modification is found at Ser-336. Residue Ser-341 is modified to Phosphoserine. Residues Ser-341–Gln-350 are compositionally biased toward low complexity. Disordered regions lie at residues Ser-341–Asp-368 and Glu-445–Tyr-473. 3 O-linked (GlcNAc) serine glycosylation sites follow: Ser-344, Ser-345, and Ser-356. Phosphoserine is present on Ser-360.

It belongs to the protein kinase superfamily. CAMK Ser/Thr protein kinase family. CaMK subfamily. In terms of assembly, monomer. Interacts with protein phosphatase 2A (PPP2CA/PPP2CB); the interaction is mutually exclusive with binding to Ca(2+)/calmodulin. Post-translationally, phosphorylated by CaMKK1 and CaMKK2 on Thr-200. Dephosphorylated by protein phosphatase 2A. Autophosphorylated on Ser-12 and Ser-13. Glycosylation at Ser-189 modulates the phosphorylation of CaMK4 at Thr-200 and negatively regulates its activity toward CREB1 in basal conditions and during early inomycin stimulation. Expressed in brain, thymus, CD4 T-cells, testis and epithelial ovarian cancer tissue.

The protein localises to the cytoplasm. It is found in the nucleus. The enzyme catalyses L-seryl-[protein] + ATP = O-phospho-L-seryl-[protein] + ADP + H(+). It carries out the reaction L-threonyl-[protein] + ATP = O-phospho-L-threonyl-[protein] + ADP + H(+). Its activity is regulated as follows. Activated by Ca(2+)/calmodulin. Binding of calmodulin results in conformational change that relieves intrasteric autoinhibition and allows phosphorylation of Thr-200 within the activation loop by CaMKK1 or CaMKK2. Phosphorylation of Thr-200 results in a 10-20-fold increase in total activity to generate Ca(2+)/calmodulin-independent activity. Autophosphorylation of the N-terminus Ser-12 and Ser-13 is required for full activation. Inactivated by protein phosphatase 2A (PPP2CA/PPP2CB) which dephosphorylates Thr-200, thereby terminating autonomous activity and helping to maintain the enzyme in its autoinhibited state. In terms of biological role, calcium/calmodulin-dependent protein kinase that operates in the calcium-triggered CaMKK-CaMK4 signaling cascade and regulates, mainly by phosphorylation, the activity of several transcription activators, such as CREB1, MEF2D, JUN and RORA, which play pivotal roles in immune response, inflammation, and memory consolidation. In the thymus, regulates the CD4(+)/CD8(+) double positive thymocytes selection threshold during T-cell ontogeny. In CD4 memory T-cells, is required to link T-cell antigen receptor (TCR) signaling to the production of IL2, IFNG and IL4 (through the regulation of CREB and MEF2). Regulates the differentiation and survival phases of osteoclasts and dendritic cells (DCs). Mediates DCs survival by linking TLR4 and the regulation of temporal expression of BCL2. Phosphorylates the transcription activator CREB1 on 'Ser-133' in hippocampal neuron nuclei and contribute to memory consolidation and long term potentiation (LTP) in the hippocampus. Can activate the MAP kinases MAPK1/ERK2, MAPK8/JNK1 and MAPK14/p38 and stimulate transcription through the phosphorylation of ELK1 and ATF2. Can also phosphorylate in vitro CREBBP, PRM2, MEF2A and STMN1/OP18. The chain is Calcium/calmodulin-dependent protein kinase type IV (CAMK4) from Homo sapiens (Human).